The primary structure comprises 680 residues: Oligopeptidase A (680 aa).

His-469 contributes to the Zn(2+) binding site. Glu-470 is a catalytic residue. The Zn(2+) site is built by His-473 and His-476.

This sequence belongs to the peptidase M3 family. It depends on Zn(2+) as a cofactor.

It catalyses the reaction Hydrolysis of oligopeptides, with broad specificity. Gly or Ala commonly occur as P1 or P1' residues, but more distant residues are also important, as is shown by the fact that Z-Gly-Pro-Gly-|-Gly-Pro-Ala is cleaved, but not Z-(Gly)(5).. May play a specific role in the degradation of signal peptides after they are released from precursor forms of secreted proteins. Can cleave N-acetyl-L-Ala(4). The polypeptide is Oligopeptidase A (prlC) (Escherichia coli (strain K12)).